Consider the following 72-residue polypeptide: uncharacterized protein (72 aa).

The next 2 helical transmembrane spans lie at 15 to 35 (WEIL…IGSI) and 50 to 70 (ILIY…MYFI).

Its subcellular location is the host membrane. This is an uncharacterized protein from Spiroplasma melliferum (SpV1).